The following is a 191-amino-acid chain: Ribosome maturation factor RimM (191 aa).

Positions 107 to 184 (EDDEWHQDDL…LVLVSPPPGL (78 aa)) constitute a PRC barrel domain.

Belongs to the RimM family. As to quaternary structure, binds ribosomal protein uS19.

It is found in the cytoplasm. Functionally, an accessory protein needed during the final step in the assembly of 30S ribosomal subunit, possibly for assembly of the head region. Essential for efficient processing of 16S rRNA. May be needed both before and after RbfA during the maturation of 16S rRNA. It has affinity for free ribosomal 30S subunits but not for 70S ribosomes. In Kocuria rhizophila (strain ATCC 9341 / DSM 348 / NBRC 103217 / DC2201), this protein is Ribosome maturation factor RimM.